Consider the following 466-residue polypeptide: Glutamate--tRNA ligase 1 (466 aa).

A 'HIGH' region motif is present at residues 10-20 (PSPTGLIHLGN). Zn(2+) contacts are provided by Cys-103, Cys-105, Cys-130, and His-132. A 'KMSKS' region motif is present at residues 247-251 (PLSKR). Lys-250 is a binding site for ATP.

This sequence belongs to the class-I aminoacyl-tRNA synthetase family. Glutamate--tRNA ligase type 1 subfamily. Monomer. Zn(2+) is required as a cofactor.

It is found in the cytoplasm. The catalysed reaction is tRNA(Glu) + L-glutamate + ATP = L-glutamyl-tRNA(Glu) + AMP + diphosphate. Functionally, catalyzes the attachment of glutamate to tRNA(Glu) in a two-step reaction: glutamate is first activated by ATP to form Glu-AMP and then transferred to the acceptor end of tRNA(Glu). The sequence is that of Glutamate--tRNA ligase 1 from Methylococcus capsulatus (strain ATCC 33009 / NCIMB 11132 / Bath).